Reading from the N-terminus, the 608-residue chain is Preterminal protein (608 aa).

The short motif at 338–347 (RLPMRRRRRR) is the Nuclear localization signal element. The interval 342-377 (RRRRRRAPPPPPMSEELSEPEVEAFPPASPPRRSFE) is disordered. At serine 536 the chain carries O-(5'-phospho-DNA)-serine.

Belongs to the adenoviridae terminal protein family. Heterodimer with the polymerase; this heterodimer binds to bp 9 to 18 of the genome. Interacts with host POU2F1; POU2F1 binds to the auxiliary sequences in the inverted terminal repeats and tethers the pTP-POL heterodimer to the origin DNA thereby participating in the assembly of the pre-initiation complex (POL-TP-DBP-NFIA-POU2F1). Post-translationally, preterminal protein is used to replicate viral genome, upon genomic encapsidation it is processed first into iTP and finally into TP by adenovirus protease.

The protein resides in the host nucleus matrix. Protein covalently bound to the viral DNA that acts as a primer for viral genomic replication by DNA strand displacement. Assembles on the viral origin of replication in an initiation complex with viral polymerase, DBP, host NFIA and host POU2F1/OCT1. During initiation, the polymerase covalently couples the first dCTP with Ser-580 of pTP. The terminal protein stimulates the template activity over 20 fold compared to protein-free templates. Neo-synthesized viral genomes are linked to two preterminal proteins, one for each 5' end. These new genomes are encapsidated in the nucleus, and during capsid maturation by viral protease, preterminal protein is first cleaved into intermediary (iTP), then into mature TP. May play a role in host nuclear matrix localization of genomic DNA. In Canine adenovirus serotype 1 (strain CLL) (CAdV-1), this protein is Preterminal protein.